The following is a 252-amino-acid chain: Small ribosomal subunit protein uS2 (252 aa).

The protein belongs to the universal ribosomal protein uS2 family.

The polypeptide is Small ribosomal subunit protein uS2 (Chlorobium phaeobacteroides (strain DSM 266 / SMG 266 / 2430)).